A 96-amino-acid chain; its full sequence is Cytochrome c-553 (96 aa).

Residues M1–A19 form the signal peptide. C29, C32, H33, and M73 together coordinate heme c.

This sequence belongs to the cytochrome c family. Post-translationally, binds 1 heme c group covalently per subunit.

The protein resides in the periplasm. Natural electron acceptor for a formate dehydrogenase. The sequence is that of Cytochrome c-553 from Helicobacter pylori (strain ATCC 700392 / 26695) (Campylobacter pylori).